Consider the following 181-residue polypeptide: Transcription factor bHLH167 (181 aa).

A disordered region spans residues 1–22 (MGRAREIGEGNSSSLREQRNLR). The bHLH domain occupies 14-63 (SLREQRNLREKDRRMRMKHLFSILSSHVSPTRKLPVPHLIDQATSYMIQL).

Belongs to the bHLH protein family.

It localises to the nucleus. The protein is Transcription factor bHLH167 of Arabidopsis thaliana (Mouse-ear cress).